The chain runs to 185 residues: MIADIKKDAQERMGKCVEATKNQMAKVRTGRAHPSLLDSIQVSYYGTMTPLNQVANVGIEDARTLSVTVFDRSAIQAVEKAIMSSDLGLNPMSAGATLRIPLPALTEERRKDFIKVVRAEAEGGRVAIRNVRRDAISDVKKLEKAKECTEDDVRRFEDEVQKFTDAHIKKVDEILAAKEIELMEV.

The protein belongs to the RRF family.

The protein localises to the cytoplasm. Its function is as follows. Responsible for the release of ribosomes from messenger RNA at the termination of protein biosynthesis. May increase the efficiency of translation by recycling ribosomes from one round of translation to another. The protein is Ribosome-recycling factor of Shewanella sp. (strain MR-4).